A 25-amino-acid chain; its full sequence is Kunitz-type serine protease inhibitor RsTIS5 (25 aa).

Residues 1–25 (EAEPKPFNPVCYEPKEVGPCKAYVP) form the BPTI/Kunitz inhibitor domain.

Its function is as follows. Serine protease inhibitor. Inhibits trypsin, elastase and plasmin. Does not inhibit kallikrein. The protein is Kunitz-type serine protease inhibitor RsTIS5 of Rhipicephalus sanguineus (Brown dog tick).